The following is a 325-amino-acid chain: Probable ABC transporter permease YtrD (325 aa).

8 consecutive transmembrane segments (helical) span residues 16–36 (VALV…ILNM), 63–83 (SSFI…QLGI), 113–133 (MVIV…IMLL), 146–166 (LGMI…GALT), 179–199 (VAIS…ILFG), 233–253 (YLVI…ISFV), 272–292 (PVQI…GFTA), and 298–318 (GYLI…YFAI).

The protein belongs to the ABC-5 integral membrane protein family. In terms of assembly, the complex is composed of 2 ATP-binding proteins (YtrB and YtrE), 2 transmembrane proteins (YtrC and YtrD) and a solute-binding protein (YtrF).

It localises to the cell membrane. Its function is as follows. Part of the ABC transporter complex YtrBCDEF that plays a role in acetoin utilization during stationary phase and sporulation. The sequence is that of Probable ABC transporter permease YtrD (ytrD) from Bacillus subtilis (strain 168).